The sequence spans 338 residues: MFQAFPGDYDSGSRCSSSPSAESQYLSSVDSFGSPPTAAASQECAGLGEMPGSFVPTVTAITTSQDLQWLVQPTLISSMAQSQGQPLASQPPAVDPYDMPGTSYSTPGLSAYSTGGASGSGGPSTSTTTSGPVSARPARARPRRPREETLTPEEEEKRRVRRERNKLAAAKCRNRRRELTDRLQAETDQLEEEKAELESEIAELQKEKERLEFVLVAHKPGCKIPYEEGPGPGPLAEVRDLPGSTSAKEDGFGWLLPPPPPPPLPFQSSRDAPPNLTASLFTHSEVQVLGDPFPVVSPSYTSSFVLTCPEVSAFAGAQRTSGSEQPSDPLNSPSLLAL.

Disordered regions lie at residues 1–54 (MFQA…PGSF) and 80–179 (AQSQ…RREL). Polar residues-rich tracts occupy residues 13–31 (SRCS…SVDS) and 102–112 (TSYSTPGLSAY). The residue at position 27 (S27) is a Phosphoserine. Positions 123-137 (PSTSTTTSGPVSARP) are enriched in low complexity. The bZIP domain maps to 155–218 (EEKRRVRRER…ERLEFVLVAH (64 aa)). Residues 157–182 (KRRVRRERNKLAAAKCRNRRRELTDR) form a basic motif region. The segment at 183 to 211 (LQAETDQLEEEKAELESEIAELQKEKERL) is leucine-zipper. 2 disordered regions span residues 222–276 (CKIP…PPNL) and 316–338 (GAQR…LLAL). A compositionally biased stretch (pro residues) spans 256–265 (LPPPPPPPLP). 2 stretches are compositionally biased toward polar residues: residues 266–276 (FQSSRDAPPNL) and 318–338 (QRTS…LLAL).

The protein belongs to the bZIP family. Fos subfamily. In terms of assembly, heterodimer; binds to DNA as heterodimer. Component of an AP-1 transcription factor complex; composed of FOS-JUN heterodimers. As part of the AP-1 transcription factor complex, forms heterodimers with JUN, JUNB or JUND, thereby binding to the AP-1 consensus sequence and stimulating transcription. Interacts with the BAF multiprotein chromatin-remodeling complex subunits SMARCB1 and SMARCD1. Interacts with ARID1A and JUN. Homodimer under oxidizing conditions and monomer under reducing conditions (in vitro). Heterodimer; binds to DNA as heterodimer. Forms heterodimers with JUNB, JUN or JUND; thereby binding to the AP-1 consensus sequence but does not stimulate transcription. Forms heterodimers with JUND under oxidizing conditions. In terms of processing, phosphorylated. Phosphorylated at Ser-27 by CSNK2A1; phosphorylation increases protein stability and transactivation potential. As to expression, expressed in brain, including the preoptic area of the hypothalamus, the main and accessory olfactory bulbs, the pyriform cortex and the hippocampus (at protein level). Expressed in the neurons of the subgranular zone of the dentate gyrus in the hippocampus (at protein level). Expressed in pyramidal cells in CA1 and CA3, in the dentate gyrus and the nucleus accumbens of the striatum (at protein level). Expressed in the core and shell of the nucleus accumbens of the striatum (at protein level). Expressed in the neurons of the subgranular zone of the dentate gyrus in the hippocampus (at protein level).

It is found in the nucleus. Functionally, heterodimerizes with proteins of the JUN family to form an AP-1 transcription factor complex, thereby enhancing their DNA binding activity to gene promoters containing an AP-1 consensus sequence 5'-TGA[GC]TCA-3' and enhancing their transcriptional activity. As part of the AP-1 complex, facilitates enhancer selection together with cell-type-specific transcription factors by collaboratively binding to nucleosomal enhancers and recruiting the SWI/SNF (BAF) chromatin remodeling complex to establish accessible chromatin. Together with JUN, plays a role in activation-induced cell death of T cells by binding to the AP-1 promoter site of FASLG/CD95L, and inducing its transcription in response to activation of the TCR/CD3 signaling pathway. Exhibits transactivation activity in vitro. Involved in the display of nurturing behavior towards newborns. May play a role in neurogenesis in the hippocampus and in learning and memory-related tasks by regulating the expression of various genes involved in neurogenesis, depression and epilepsy. Implicated in behavioral responses related to morphine reward and spatial memory. Exhibits lower transactivation activity than isoform 1 in vitro. The heterodimer with JUN does not display any transcriptional activity, and may thereby act as an transcriptional inhibitor. May be involved in the regulation of neurogenesis in the hippocampus. May play a role in synaptic modifications in nucleus accumbens medium spiny neurons and thereby play a role in adaptive and pathological reward-dependent learning, including maladaptive responses involved in drug addiction. Seems to be more stably expressed with a half-life of ~9.5 hours in cell culture as compared to 1.5 hours half-life of isoform 1. The chain is Protein FosB from Mus musculus (Mouse).